Reading from the N-terminus, the 360-residue chain is Protein Wnt-2 (360 aa).

A signal peptide spans 1-25 (MNVPLGGIWLWLPLLLTWLTPEVSS). 11 cysteine pairs are disulfide-bonded: Cys-76/Cys-87, Cys-127/Cys-135, Cys-137/Cys-157, Cys-206/Cys-220, Cys-208/Cys-215, Cys-278/Cys-309, Cys-294/Cys-304, Cys-308/Cys-348, Cys-324/Cys-339, Cys-326/Cys-336, and Cys-331/Cys-332. A lipid anchor (O-palmitoleoyl serine; by PORCN) is attached at Ser-212. An N-linked (GlcNAc...) asparagine glycan is attached at Asn-295.

It belongs to the Wnt family. In terms of processing, palmitoleoylation is required for efficient binding to frizzled receptors. Depalmitoleoylation leads to Wnt signaling pathway inhibition. In embryos in the developing allantois, pericardium heart, and ventral-lateral mesoderm; in adults in lung, brain, heart and placenta.

Its subcellular location is the secreted. It localises to the extracellular space. It is found in the extracellular matrix. Ligand for members of the frizzled family of seven transmembrane receptors. Functions in the canonical Wnt/beta-catenin signaling pathway. Functions as a upstream regulator of FGF10 expression. Plays an important role in embryonic lung development. May contribute to embryonic brain development by regulating the proliferation of dopaminergic precursors and neurons. In Mus musculus (Mouse), this protein is Protein Wnt-2 (Wnt2).